Consider the following 286-residue polypeptide: Bifunctional protein FolD (286 aa).

Residues 165 to 167, Ser-190, and Val-231 contribute to the NADP(+) site; that span reads GRS.

The protein belongs to the tetrahydrofolate dehydrogenase/cyclohydrolase family. Homodimer.

The enzyme catalyses (6R)-5,10-methylene-5,6,7,8-tetrahydrofolate + NADP(+) = (6R)-5,10-methenyltetrahydrofolate + NADPH. The catalysed reaction is (6R)-5,10-methenyltetrahydrofolate + H2O = (6R)-10-formyltetrahydrofolate + H(+). Its pathway is one-carbon metabolism; tetrahydrofolate interconversion. Catalyzes the oxidation of 5,10-methylenetetrahydrofolate to 5,10-methenyltetrahydrofolate and then the hydrolysis of 5,10-methenyltetrahydrofolate to 10-formyltetrahydrofolate. The sequence is that of Bifunctional protein FolD from Bacillus mycoides (strain KBAB4) (Bacillus weihenstephanensis).